Consider the following 389-residue polypeptide: Globin-like protein 6 (389 aa).

Residues methionine 1–valine 15 show a composition bias toward polar residues. 3 disordered regions span residues methionine 1–serine 38, arginine 96–serine 123, and threonine 143–proline 185. A compositionally biased stretch (basic residues) spans serine 16–serine 25. One can recognise a Globin domain in the interval histidine 196 to glutamine 347. 2 residues coordinate heme b: histidine 254 and histidine 286. The disordered stretch occupies residues serine 367–methionine 389. Residues lysine 376–methionine 389 show a composition bias toward basic and acidic residues.

Belongs to the globin family. Expressed in the head and tail neurons and nerve cord.

In terms of biological role, may play a role as physiological sensor for oxygen via redox signaling and/or electron transport. In Caenorhabditis elegans, this protein is Globin-like protein 6.